Reading from the N-terminus, the 198-residue chain is V-type ATP synthase subunit E (198 aa).

It belongs to the V-ATPase E subunit family.

Its function is as follows. Produces ATP from ADP in the presence of a proton gradient across the membrane. This Clostridium perfringens (strain SM101 / Type A) protein is V-type ATP synthase subunit E.